The chain runs to 576 residues: 2-succinyl-5-enolpyruvyl-6-hydroxy-3-cyclohexene-1-carboxylate synthase (576 aa).

Belongs to the TPP enzyme family. MenD subfamily. In terms of assembly, homodimer. It depends on Mg(2+) as a cofactor. Requires Mn(2+) as cofactor. Thiamine diphosphate serves as cofactor.

The enzyme catalyses isochorismate + 2-oxoglutarate + H(+) = 5-enolpyruvoyl-6-hydroxy-2-succinyl-cyclohex-3-ene-1-carboxylate + CO2. Its pathway is quinol/quinone metabolism; 1,4-dihydroxy-2-naphthoate biosynthesis; 1,4-dihydroxy-2-naphthoate from chorismate: step 2/7. It functions in the pathway quinol/quinone metabolism; menaquinone biosynthesis. Its function is as follows. Catalyzes the thiamine diphosphate-dependent decarboxylation of 2-oxoglutarate and the subsequent addition of the resulting succinic semialdehyde-thiamine pyrophosphate anion to isochorismate to yield 2-succinyl-5-enolpyruvyl-6-hydroxy-3-cyclohexene-1-carboxylate (SEPHCHC). This chain is 2-succinyl-5-enolpyruvyl-6-hydroxy-3-cyclohexene-1-carboxylate synthase, found in Photobacterium profundum (strain SS9).